The primary structure comprises 275 residues: Membrane protein insertase MisCB (275 aa).

Residues 1–18 (MLKTYQKLLAMGIFLIVL) form the signal peptide. C19 carries N-palmitoyl cysteine lipidation. The S-diacylglycerol cysteine moiety is linked to residue C19. Transmembrane regions (helical) follow at residues 63 to 83 (YGLS…PLFV), 139 to 159 (AMGC…YYAI), 172 to 192 (WFSL…MYFV), 219 to 239 (LMVF…PAAL), and 240 to 260 (PLYW…LQMT).

This sequence belongs to the OXA1/ALB3/YidC family. Type 2 subfamily. In terms of assembly, mostly monomeric, it may also form dimers. Interacts with SpoIIIAE. Forms a complex with the F(1)F(0) ATP synthase in which can be found the alpha, beta, gamma, delta and epsilon subunits of F(1) and a, b and subunits of F(0). YqgA is found in the same complex.

The protein resides in the cell membrane. Functionally, required for the insertion and/or proper folding and/or complex formation of integral membrane proteins into the membrane. Involved in integration of membrane proteins that insert both dependently and independently of the Sec translocase complex, as well as at least some lipoproteins. Also involved in protein secretion processes. It has an overlapping, although partly distinct, function compared to SpoIIIJ(MisCB). This chain is Membrane protein insertase MisCB (misCB), found in Bacillus subtilis (strain 168).